The chain runs to 156 residues: MDKKVTEVVEALAQPIVEELNLELVDVEYVKEGKDWFLRVFIDSETGVDIEECGAVSERLSEALDKEDPIPHLYFLDVSSPGAERPLKKEKDFEQAVGSQVAIKTYEPIDGEKMFEGKLLSYDGTTITLLLTIKTRKKEIQIPMDKVANARLAVTF.

This sequence belongs to the RimP family.

The protein resides in the cytoplasm. Required for maturation of 30S ribosomal subunits. In Bacillus cytotoxicus (strain DSM 22905 / CIP 110041 / 391-98 / NVH 391-98), this protein is Ribosome maturation factor RimP.